The primary structure comprises 239 residues: Fatty acid metabolism regulator protein (239 aa).

The HTH gntR-type domain maps to Lys-6–Phe-74. The H-T-H motif DNA-binding region spans Glu-34–Gln-53.

As to quaternary structure, homodimer.

It localises to the cytoplasm. Multifunctional regulator of fatty acid metabolism. This is Fatty acid metabolism regulator protein from Shewanella pealeana (strain ATCC 700345 / ANG-SQ1).